The sequence spans 263 residues: UPF0246 protein Mmar10_0828 (263 aa).

Belongs to the UPF0246 family.

The polypeptide is UPF0246 protein Mmar10_0828 (Maricaulis maris (strain MCS10) (Caulobacter maris)).